A 950-amino-acid chain; its full sequence is MNTEAEQQLLHHARNGNAEEVRKLLEAMARAEVVADIDCKGRSKSNLGWTPLHLACYFGHKQVVQDLLKAGAKVNMLNDMGDTPLHRAAFTGRKELVMLLLEYNADTTVVNGSGQTAKEATHDKEIRQMLEAVERTQQRKLEELLLGAAREGRTAEVSALLSRPNPPDVNCSDQLGNTPLHCAAYRAHKQCVLKLLRSGADPSLKNKNDQKPLDLAHGTEMKHILVGNKVVHKALKRFEGPLWKSSRFFGWKLFWVVLEHGVLSWYRKQPDAVHNSYRQGCKHLTQAVCTVKPTDGCLFSVRCFDDTVHGFRVPKNSLQQSREKWLEAIEEHSAYSTHYCSQDQVTDDEEEDVASAMDLKESLARAQTCQQRLDREIYNFLKMIKECDVAKDMLPSFLQKADVLSEASRETCVALSDCLNLFTKQEGVRNFKLEQEQEKNKILSEALETLATEHHELERSLVEGSPPVSILSEDEFYDALSGSESEGSLTCLEAVTARAFEENEVPANSGKHRMSEGKDCGGGDALSNGIKKHRTSLPSPMFSRNDFSIWSILRKCIGMELSKITMPVIFNEPLSFLQRLTEYMEHTYLIHKASSFSDPVERMQCVAAFAVSAVASQWERTGKPFNPLLGETYELVRDDLGFRLISEQVSHHPPISAFHAEGLNNDFIFHGSIYPKLKFWGKSVEAEPKGTITLELLEHNEAYTWTNPTCCVHNIIVGKLWIEQYGNVEIINHKTGDKCVLNFKPCGLFGKELHKVEGYIQDKSKKKLCALYGKWTECLYSVDPATFDAYKKNDKKNTEEKKTSKQASTSEESDEMPVPDSESVFVIPGSALLWRIAPRPPNSAQMYNFTSFAMVLNEVDKEMETVIPKTDCRLRPDIRAMENGEIDQASEEKKRLEEKQRAARKNRSKSEEDWKTRWFHQGPNPYSGAQDWIYSGSYWDRNYFNLPDIY.

An interaction with RAB7A region spans residues 1–237 (MNTEAEQQLL…NKVVHKALKR (237 aa)). ANK repeat units follow at residues 47 to 76 (LGWT…KVNM), 80 to 109 (MGDT…DTTV), and 175 to 204 (LGNT…DPSL). In terms of domain architecture, PH spans 235 to 334 (LKRFEGPLWK…WLEAIEEHSA (100 aa)). The stretch at 430-463 (NFKLEQEQEKNKILSEALETLATEHHELERSLVE) forms a coiled coil. The FFAT signature appears at 469 to 483 (SILSEDEFYDALSGS). 2 disordered regions span residues 795–821 (KKNT…VPDS) and 881–913 (MENG…SEED). Residues 877-913 (DIRAMENGEIDQASEEKKRLEEKQRAARKNRSKSEED) are a coiled coil. Basic and acidic residues predominate over residues 890–901 (SEEKKRLEEKQR).

It belongs to the OSBP family. As to quaternary structure, interacts (via FFAT motif) with VAPA. Interacts (via FFAT motif) with VAPB. Interacts with the GTP-bound form of RAB7A. Interacts with OAS1B. Interacts (via FFAT motif) with MOSPD2 (via MSP domain). As to expression, detected in prostate and liver.

It localises to the late endosome. In terms of biological role, binds phospholipids; exhibits strong binding to phosphatidic acid and weak binding to phosphatidylinositol 3-phosphate. Stabilizes GTP-bound RAB7A on late endosomes/lysosomes and alters functional properties of late endocytic compartments via its interaction with RAB7A. Binds 25-hydroxycholesterol and cholesterol. The chain is Oxysterol-binding protein-related protein 1 from Rattus norvegicus (Rat).